A 270-amino-acid chain; its full sequence is MGVSMITIVTLLDECDRLPGRSRDAASTLWIFLIKQCMEQIQDDVGVPIIVRAADLFRFAKPMLILPRQHRPIVRTKPPDGTGVRGTGLAGTRDSFIVRLFEDVAGCSTEWQDVLSGYLMLESEVSGNAPHSLWIVGAADICRIALECIPLPKRLLAIKVSGTWSGMPWAIPDNIQTLLTSTWEPKFDTPEDRAHFCDSDMVCVYKILGSPPNPLKPPEIEPPQMSSTPGRLFCCGKCCKKEDRDAIAIPVRYTATGKSRIQKKCRAGSH.

It belongs to the herpesviridae US2 family.

The chain is Protein US2 homolog (MDV091) from Gallid herpesvirus 2 (strain Chicken/Md5/ATCC VR-987) (GaHV-2).